A 421-amino-acid polypeptide reads, in one-letter code: Histidine--tRNA ligase (421 aa).

The protein belongs to the class-II aminoacyl-tRNA synthetase family. As to quaternary structure, homodimer.

Its subcellular location is the cytoplasm. The enzyme catalyses tRNA(His) + L-histidine + ATP = L-histidyl-tRNA(His) + AMP + diphosphate + H(+). The sequence is that of Histidine--tRNA ligase from Francisella tularensis subsp. holarctica (strain FTNF002-00 / FTA).